The chain runs to 331 residues: Probable transaldolase (331 aa).

The Schiff-base intermediate with substrate role is filled by K142.

The protein belongs to the transaldolase family. Type 1 subfamily. As to quaternary structure, homodimer.

The protein localises to the cytoplasm. The enzyme catalyses D-sedoheptulose 7-phosphate + D-glyceraldehyde 3-phosphate = D-erythrose 4-phosphate + beta-D-fructose 6-phosphate. Its pathway is carbohydrate degradation; pentose phosphate pathway; D-glyceraldehyde 3-phosphate and beta-D-fructose 6-phosphate from D-ribose 5-phosphate and D-xylulose 5-phosphate (non-oxidative stage): step 2/3. In terms of biological role, transaldolase is important for the balance of metabolites in the pentose-phosphate pathway. In Drosophila melanogaster (Fruit fly), this protein is Probable transaldolase.